The chain runs to 179 residues: HTH-type transcriptional regulator AldR (179 aa).

Residues 32–93 (LDEVDRRILS…DIDPVAVGLP (62 aa)) enclose the HTH asnC-type domain. The H-T-H motif DNA-binding region spans 51–70 (NNALADTVGIAPSTCHGRVR).

Homooctamer. Homotetramer. Tetramer of dimers. The N-terminal DNA-binding domains are swapped, forming a dimer, and four dimers are assembled into an octamer through crystal symmetry.

Its activity is regulated as follows. The DNA-binding activity of AldR is modulated by interaction of AldR with various amino acids. Alanine, tryptophan, tyrosine and aspartate completely abolish the DNA binding ability of AldR. On the other hand, glutamate and asparagine reduce AldR binding to DNA but do not completely abolish it. Binding of amino acids can lead to structural modifications and changes in oligomeric association. Activity is also inhibited by 3 small molecule inhibitors, tetrahydroquinoline carbonitrile derivative (S010-0261), levothyroxine and liothyronine, which can disrupt the AldR-DNA complex. In terms of biological role, transcriptional regulator that might play a role under hypoxic conditions. Regulates the expression of ald, which encodes L-alanine dehydrogenase. Serves as both an activator for ald expression in the presence of L-alanine and a repressor in the absence of L-alanine. Acts by binding directly to the upstream region of the ald gene. Four AldR-binding sites (O2, O1, O4 and O3) were identified upstream of the ald gene. O2, O1 and O4 are required for the induction of ald expression by alanine, while O3 is directly involved in the repression of ald expression, by occluding the access of RNA polymerase to the ald promoter. In addition to O3, both O1 and O4 are also necessary for full repression of ald expression in the absence of alanine. This chain is HTH-type transcriptional regulator AldR, found in Mycobacterium tuberculosis (strain ATCC 25618 / H37Rv).